The primary structure comprises 143 residues: Ribonuclease P protein component (143 aa).

The tract at residues 111–143 is disordered; the sequence is RVKRKGGGPGGNRRSAPPGSAPLTDDGRLRGEP.

The protein belongs to the RnpA family. In terms of assembly, consists of a catalytic RNA component (M1 or rnpB) and a protein subunit.

The enzyme catalyses Endonucleolytic cleavage of RNA, removing 5'-extranucleotides from tRNA precursor.. Functionally, RNaseP catalyzes the removal of the 5'-leader sequence from pre-tRNA to produce the mature 5'-terminus. It can also cleave other RNA substrates such as 4.5S RNA. The protein component plays an auxiliary but essential role in vivo by binding to the 5'-leader sequence and broadening the substrate specificity of the ribozyme. The chain is Ribonuclease P protein component from Deinococcus geothermalis (strain DSM 11300 / CIP 105573 / AG-3a).